Consider the following 290-residue polypeptide: Small ribosomal subunit biogenesis GTPase RsgA (290 aa).

The CP-type G domain maps to 62–213 (KNSLVRPPIV…IADTPGFSSL (152 aa)). Residues 111-114 (SKMD) and 156-164 (GQTGVGKST) each bind GTP. Zn(2+)-binding residues include cysteine 237, cysteine 242, histidine 244, and cysteine 250.

It belongs to the TRAFAC class YlqF/YawG GTPase family. RsgA subfamily. Monomer. Associates with 30S ribosomal subunit, binds 16S rRNA. Zn(2+) is required as a cofactor.

The protein resides in the cytoplasm. One of several proteins that assist in the late maturation steps of the functional core of the 30S ribosomal subunit. Helps release RbfA from mature subunits. May play a role in the assembly of ribosomal proteins into the subunit. Circularly permuted GTPase that catalyzes slow GTP hydrolysis, GTPase activity is stimulated by the 30S ribosomal subunit. This is Small ribosomal subunit biogenesis GTPase RsgA from Streptococcus pyogenes serotype M6 (strain ATCC BAA-946 / MGAS10394).